A 278-amino-acid polypeptide reads, in one-letter code: Fasciclin-like arabinogalactan protein 5 (278 aa).

The N-terminal stretch at 1-24 (MGLKASLSLLSLTILLVFSKVVTA) is a signal peptide. Residues 25 to 169 (NNITLAFQKY…LSIIQITMPI (145 aa)) form the FAS1 domain. N-linked (GlcNAc...) asparagine glycosylation is found at Asn-26, Asn-74, Asn-126, and Asn-159. A disordered region spans residues 199–257 (VVPAPGPAADDNSPDSAVPKTPPAPATDTPEADSPAPAPSADNEKIEAADKAKPSSSAS). Over residues 224–239 (ATDTPEADSPAPAPSA) the composition is skewed to low complexity. The segment covering 240–251 (DNEKIEAADKAK) has biased composition (basic and acidic residues). Residue Ser-255 is the site of GPI-anchor amidated serine attachment. Positions 256-278 (ASKAGWSFDVILLLAFLASFAGF) are cleaved as a propeptide — removed in mature form.

The protein belongs to the fasciclin-like AGP family.

Its subcellular location is the cell membrane. May be a cell surface adhesion protein. The polypeptide is Fasciclin-like arabinogalactan protein 5 (FLA5) (Arabidopsis thaliana (Mouse-ear cress)).